The following is a 260-amino-acid chain: MICOS complex subunit mic25-a (260 aa).

The interval 1-92 (MGGSESTGRK…KPTARGVGHQ (92 aa)) is disordered. The N-myristoyl glycine moiety is linked to residue glycine 2. The span at 28–39 (RLSDEVVNRMKD) shows a compositional bias: basic and acidic residues. Residues 48–64 (STSTASGTTSGPTTFPS) show a composition bias toward low complexity. Positions 94 to 187 (AEEDLYRRYE…LNSIEKKNLE (94 aa)) form a coiled coil. Residues 213–255 (DPVCMDLQSNILKCYAENKQERLNCSDLAKEYGKCVSAAQKNL) enclose the CHCH domain. 2 consecutive short sequence motifs (cx9C motif) follow at residues 216-226 (CMDLQSNILKC) and 237-247 (CSDLAKEYGKC). 2 disulfide bridges follow: cysteine 216/cysteine 247 and cysteine 226/cysteine 237.

It belongs to the MICOS complex subunit Mic19 family. Metazoan Mic25 subfamily. As to quaternary structure, component of the mitochondrial contact site and cristae organizing system (MICOS) complex (also known as MINOS or MitOS complex).

The protein resides in the mitochondrion inner membrane. Component of the MICOS complex, a large protein complex of the mitochondrial inner membrane that plays crucial roles in the maintenance of crista junctions, inner membrane architecture, and formation of contact sites to the outer membrane. This is MICOS complex subunit mic25-a (chchd6-a) from Xenopus laevis (African clawed frog).